A 152-amino-acid polypeptide reads, in one-letter code: Aspartate-rich protein (152 aa).

Positions 1-19 are cleaved as a signal peptide; sequence MQKLLLAVLFFSLLAVATA. Residues 82-113 show a composition bias toward basic and acidic residues; the sequence is ATPKTEAEPGSLDKGEGTKGEKGKEGKKEKGE. Positions 82–152 are disordered; that stretch reads ATPKTEAEPG…VHENDDENED (71 aa). The span at 135–152 shows a compositional bias: acidic residues; the sequence is DDDDDRDDVHENDDENED.

Prismatic layer of shell (at protein level). Expressed primarily in the mantle with highest level in the mantle edge and lower level in the mantle pallium.

The protein localises to the secreted. The protein is Aspartate-rich protein of Margaritifera margaritifera (Freshwater pearl mussel).